The primary structure comprises 502 residues: Glycerol kinase (502 aa).

Threonine 14 lines the ADP pocket. Residues threonine 14, threonine 15, and serine 16 each coordinate ATP. Threonine 14 is a binding site for sn-glycerol 3-phosphate. Position 18 (arginine 18) interacts with ADP. Sn-glycerol 3-phosphate is bound by residues arginine 84, glutamate 85, tyrosine 136, and aspartate 246. Glycerol is bound by residues arginine 84, glutamate 85, tyrosine 136, aspartate 246, and glutamine 247. 2 residues coordinate ADP: threonine 268 and glycine 311. Residues threonine 268, glycine 311, glutamine 315, and glycine 412 each coordinate ATP. Residues glycine 412 and asparagine 416 each coordinate ADP.

This sequence belongs to the FGGY kinase family. In terms of assembly, homotetramer and homodimer (in equilibrium). Heterodimer with EIIA-Glc. Binds 1 zinc ion per glycerol kinase EIIA-Glc dimer. The zinc ion is important for dimerization.

It catalyses the reaction glycerol + ATP = sn-glycerol 3-phosphate + ADP + H(+). It functions in the pathway polyol metabolism; glycerol degradation via glycerol kinase pathway; sn-glycerol 3-phosphate from glycerol: step 1/1. With respect to regulation, activity of this regulatory enzyme is affected by several metabolites. Allosterically and non-competitively inhibited by fructose 1,6-bisphosphate (FBP) and unphosphorylated phosphocarrier protein EIIA-Glc (III-Glc), an integral component of the bacterial phosphotransferase (PTS) system. Functionally, key enzyme in the regulation of glycerol uptake and metabolism. Catalyzes the phosphorylation of glycerol to yield sn-glycerol 3-phosphate. The sequence is that of Glycerol kinase from Escherichia fergusonii (strain ATCC 35469 / DSM 13698 / CCUG 18766 / IAM 14443 / JCM 21226 / LMG 7866 / NBRC 102419 / NCTC 12128 / CDC 0568-73).